Consider the following 427-residue polypeptide: UDP-N-acetylglucosamine 1-carboxyvinyltransferase (427 aa).

A phosphoenolpyruvate-binding site is contributed by Lys-24 to Asn-25. Arg-95 contacts UDP-N-acetyl-alpha-D-glucosamine. The Proton donor role is filled by Cys-119. 2-(S-cysteinyl)pyruvic acid O-phosphothioketal is present on Cys-119. Residues Arg-124–Gln-128, Asp-308, and Val-330 each bind UDP-N-acetyl-alpha-D-glucosamine.

Belongs to the EPSP synthase family. MurA subfamily.

The protein resides in the cytoplasm. The catalysed reaction is phosphoenolpyruvate + UDP-N-acetyl-alpha-D-glucosamine = UDP-N-acetyl-3-O-(1-carboxyvinyl)-alpha-D-glucosamine + phosphate. Its pathway is cell wall biogenesis; peptidoglycan biosynthesis. In terms of biological role, cell wall formation. Adds enolpyruvyl to UDP-N-acetylglucosamine. The protein is UDP-N-acetylglucosamine 1-carboxyvinyltransferase of Deinococcus geothermalis (strain DSM 11300 / CIP 105573 / AG-3a).